Consider the following 607-residue polypeptide: Elongation factor 4 (607 aa).

Positions 11–193 (EKIRNFSIIA…QIVEKVPAPT (183 aa)) constitute a tr-type G domain. GTP contacts are provided by residues 23–28 (DHGKST) and 140–143 (NKID).

Belongs to the TRAFAC class translation factor GTPase superfamily. Classic translation factor GTPase family. LepA subfamily.

The protein resides in the cell membrane. It carries out the reaction GTP + H2O = GDP + phosphate + H(+). In terms of biological role, required for accurate and efficient protein synthesis under certain stress conditions. May act as a fidelity factor of the translation reaction, by catalyzing a one-codon backward translocation of tRNAs on improperly translocated ribosomes. Back-translocation proceeds from a post-translocation (POST) complex to a pre-translocation (PRE) complex, thus giving elongation factor G a second chance to translocate the tRNAs correctly. Binds to ribosomes in a GTP-dependent manner. The polypeptide is Elongation factor 4 (Streptococcus pneumoniae (strain Hungary19A-6)).